We begin with the raw amino-acid sequence, 703 residues long: Ion-translocating oxidoreductase complex subunit C (703 aa).

2 4Fe-4S ferredoxin-type domains span residues 368-397 and 407-436; these read MAPQ…QQLY and KARN…VQYY. [4Fe-4S] cluster contacts are provided by C377, C380, C383, C387, C416, C419, C422, and C426. 2 disordered regions span residues 505-558 and 653-674; these read AVPA…EDPR and AQQA…EEDP. Residues 524–539 show a composition bias toward basic and acidic residues; that stretch reads AAREARKAQARERRAQ.

It belongs to the 4Fe4S bacterial-type ferredoxin family. RnfC subfamily. In terms of assembly, the complex is composed of six subunits: RnfA, RnfB, RnfC, RnfD, RnfE and RnfG. Requires [4Fe-4S] cluster as cofactor.

Its subcellular location is the cell inner membrane. Functionally, part of a membrane-bound complex that couples electron transfer with translocation of ions across the membrane. The chain is Ion-translocating oxidoreductase complex subunit C from Serratia proteamaculans (strain 568).